A 517-amino-acid polypeptide reads, in one-letter code: Apolipoprotein N-acyltransferase (517 aa).

7 helical membrane-spanning segments follow: residues 5 to 25 (SFFS…ATLT), 26 to 46 (FAPY…LWLL), 55 to 75 (GLIG…WVHV), 90 to 110 (FLMS…GALF), 128 to 148 (VIWL…PWLW), 162 to 182 (APIL…GALV), and 193 to 213 (LMVP…SWVV). Residues 225–471 (IQGNVPQELK…TAVLRATITP (247 aa)) form the CN hydrolase domain. E264 serves as the catalytic Proton acceptor. K330 is a catalytic residue. Residue C382 is the Nucleophile of the active site.

This sequence belongs to the CN hydrolase family. Apolipoprotein N-acyltransferase subfamily.

It is found in the cell inner membrane. The enzyme catalyses N-terminal S-1,2-diacyl-sn-glyceryl-L-cysteinyl-[lipoprotein] + a glycerophospholipid = N-acyl-S-1,2-diacyl-sn-glyceryl-L-cysteinyl-[lipoprotein] + a 2-acyl-sn-glycero-3-phospholipid + H(+). The protein operates within protein modification; lipoprotein biosynthesis (N-acyl transfer). In terms of biological role, catalyzes the phospholipid dependent N-acylation of the N-terminal cysteine of apolipoprotein, the last step in lipoprotein maturation. This Photobacterium profundum (strain SS9) protein is Apolipoprotein N-acyltransferase.